The chain runs to 918 residues: MDYKETLLLPKTTFPMRGNLPQNEPKRFAKWFEKDVYEKMKKSREGKELFTLHDGPPYANGHIHIGHALNKILKDIIVKFNYFEGKAVRFTPGWDCHGLPIEQQVEKKLGTAKKEQLPKTKIRELCREHAAKFVGIQKEEFKNLGVIADWEKPYLTMDYAFEADIYRALCEIAKEGLLVERSKPVYWSWAAKTALAEAEVEYEDKVSPSIYVAFKLDKEAVQKIGKEASIIIWTTTPWTLPANTGIALNPDIEYVLTSDGYVVAADLLDELKEKGIVKGDVEKSISPKDLENLHAINPLNGRRSRIVLGEHVTTESGTGAVHTAPGHGEDDYRVGLKYDLEVLMPVDDAGRYDETIVREKLLPEEFVGMNVFEANDKICELLGDALLKKEDIKHSYPHCWRTHKPIIFRATKQWFIAVDKAPKDLQKTLRQIALEEVEKTTFYPEWGRNRLKSMIENRPDWCISRQRDWGVPIAFFRNKKTGEVIYDEKVLNYIAMIFERMGTDAWYSLSVEELLYPGSGYDPNDLEKVMDILDVWFDSGSTWYAVLKSRRYDAGNYPADLYLEGSDQHRGWFQSSLLVSGAIEKRAPFKAILTHGFTVDEKGEKMSKSKGNVVAPMDVAKKYGVEILRLWVAMSDYQSDLKISDNILKQIAEQYRKLRNTFRFMLANINDLETIQSDFGVLDRWILAKAKSVFEEVEKQFKNYQFAKGFSALNNFIVNEFSGIYLDVCKDRLYCDALNDSHRRASQSAMALIAKSMLGLIAPVLTYTADEIVEHAPSVLRNDAEDIFDFAIEPLPEIQSDFDEVYMIEARSKFNEIVDQLKKKKIIKSSLELVIETTSSKVLALDATEREDWFIVSGVEEEIGSKELGDFKVEGDQFIIKEAILHKCPRCWKYKAKEEGALCERCQKVVDGLEQAGS.

The 'HIGH' region motif lies at 57–67 (PYANGHIHIGH). Position 564 (Glu564) interacts with L-isoleucyl-5'-AMP. Positions 605–609 (KMSKS) match the 'KMSKS' region motif. Lys608 provides a ligand contact to ATP. Zn(2+) contacts are provided by Cys888, Cys891, Cys903, and Cys906.

The protein belongs to the class-I aminoacyl-tRNA synthetase family. IleS type 1 subfamily. Monomer. Zn(2+) serves as cofactor.

It is found in the cytoplasm. The catalysed reaction is tRNA(Ile) + L-isoleucine + ATP = L-isoleucyl-tRNA(Ile) + AMP + diphosphate. In terms of biological role, catalyzes the attachment of isoleucine to tRNA(Ile). As IleRS can inadvertently accommodate and process structurally similar amino acids such as valine, to avoid such errors it has two additional distinct tRNA(Ile)-dependent editing activities. One activity is designated as 'pretransfer' editing and involves the hydrolysis of activated Val-AMP. The other activity is designated 'posttransfer' editing and involves deacylation of mischarged Val-tRNA(Ile). This is Isoleucine--tRNA ligase from Nitratiruptor sp. (strain SB155-2).